Consider the following 431-residue polypeptide: Serine hydroxymethyltransferase (431 aa).

(6S)-5,6,7,8-tetrahydrofolate-binding positions include Leu-128 and 132 to 134 (GHL). An N6-(pyridoxal phosphate)lysine modification is found at Lys-237.

The protein belongs to the SHMT family. Homodimer. Requires pyridoxal 5'-phosphate as cofactor.

The protein resides in the cytoplasm. The catalysed reaction is (6R)-5,10-methylene-5,6,7,8-tetrahydrofolate + glycine + H2O = (6S)-5,6,7,8-tetrahydrofolate + L-serine. It functions in the pathway one-carbon metabolism; tetrahydrofolate interconversion. The protein operates within amino-acid biosynthesis; glycine biosynthesis; glycine from L-serine: step 1/1. Catalyzes the reversible interconversion of serine and glycine with tetrahydrofolate (THF) serving as the one-carbon carrier. This reaction serves as the major source of one-carbon groups required for the biosynthesis of purines, thymidylate, methionine, and other important biomolecules. Also exhibits THF-independent aldolase activity toward beta-hydroxyamino acids, producing glycine and aldehydes, via a retro-aldol mechanism. The sequence is that of Serine hydroxymethyltransferase from Ruegeria pomeroyi (strain ATCC 700808 / DSM 15171 / DSS-3) (Silicibacter pomeroyi).